We begin with the raw amino-acid sequence, 235 residues long: Purine nucleoside phosphorylase DeoD-type (235 aa).

Residue histidine 4 coordinates a purine D-ribonucleoside. Phosphate-binding positions include glycine 20, arginine 24, arginine 43, and 87–90 (RVGT). A purine D-ribonucleoside contacts are provided by residues 179–181 (EME) and 203–204 (SD). Aspartate 204 functions as the Proton donor in the catalytic mechanism.

This sequence belongs to the PNP/UDP phosphorylase family. Homohexamer; trimer of homodimers.

The enzyme catalyses a purine D-ribonucleoside + phosphate = a purine nucleobase + alpha-D-ribose 1-phosphate. The catalysed reaction is a purine 2'-deoxy-D-ribonucleoside + phosphate = a purine nucleobase + 2-deoxy-alpha-D-ribose 1-phosphate. Catalyzes the reversible phosphorolytic breakdown of the N-glycosidic bond in the beta-(deoxy)ribonucleoside molecules, with the formation of the corresponding free purine bases and pentose-1-phosphate. The polypeptide is Purine nucleoside phosphorylase DeoD-type (Clostridium perfringens (strain SM101 / Type A)).